The chain runs to 999 residues: Sarcoplasmic/endoplasmic reticulum calcium ATPase 3 (999 aa).

N-acetylmethionine is present on Met-1. Topologically, residues 1–48 (MEAAHLLPAADVLRHFSVTAEGGLSPAQVTGARERYGPNELPSEEGKS) are cytoplasmic. Ser-17 is modified (phosphoserine). Thr-19 is subject to Phosphothreonine. Phosphoserine is present on Ser-25. Residues 49–69 (LWELVLEQFEDLLVRILLLAA) form a helical membrane-spanning segment. Over 70–89 (LVSFVLAWFEEGEETTTAFV) the chain is Lumenal. A helical transmembrane segment spans residues 90–110 (EPLVIMLILVANAIVGVWQER). Residues 111-253 (NAESAIEALK…PERTPLQRKL (143 aa)) are Cytoplasmic-facing. The helical transmembrane segment at 254-273 (DEFGRQLSHAISVICVAVWV) threads the bilayer. Topologically, residues 274-295 (INIGHFADPAHGGSWLRGAVYY) are lumenal. Residues 296–313 (FKIAVALAVAAIPEGLPA) form a helical membrane-spanning segment. Ca(2+) is bound by residues Val-304, Ala-305, Ile-307, and Glu-309. Topologically, residues 314–757 (VITTCLALGT…EEGRAIYSNM (444 aa)) are cytoplasmic. Catalysis depends on Asp-351, which acts as the 4-aspartylphosphate intermediate. The Mg(2+) site is built by Asp-351 and Thr-353. Residue Thr-353 participates in ATP binding. The segment at 370 to 400 (AEADAGSCLLHEFTISGTTYTPEGEVRQGDQ) is interaction with phospholamban 1. A Phosphothreonine modification is found at Thr-415. ATP contacts are provided by Glu-442, Arg-489, Lys-515, Arg-560, Thr-625, Gly-626, and Asp-627. Position 662 is a phosphoserine (Ser-662). The ATP site is built by Arg-678 and Lys-684. A Mg(2+)-binding site is contributed by Asp-703. Asn-706 contributes to the ATP binding site. A helical membrane pass occupies residues 758 to 777 (KQFIRYLISSNVGEVVCIFL). Ca(2+) contacts are provided by Asn-768 and Glu-771. Residues 778-787 (TAILGLPEAL) are Lumenal-facing. A helical membrane pass occupies residues 788–808 (IPVQLLWVNLVTDGLPATALG). The interaction with phospholamban 2 stretch occupies residues 788–808 (IPVQLLWVNLVTDGLPATALG). Positions 796, 799, and 800 each coordinate Ca(2+). The Cytoplasmic segment spans residues 809–828 (FNPPDLDIMEKLPRSPREAL). A helical transmembrane segment spans residues 829–851 (ISGWLFFRYLAIGVYVGLATVAA). Residues 852 to 897 (ATWWFVYDAEGPHINFYQLRNFLKCSEDNPLFAGIDCEVFESRFPT) are Lumenal-facing. Residues 898-917 (TMALSVLVTIEMCNALNSVS) form a helical membrane-spanning segment. Glu-908 is a Ca(2+) binding site. Over 918 to 930 (ENQSLLRMPPWMN) the chain is Cytoplasmic. Residues 931–949 (PWLLVAVAMSMALHFLILL) traverse the membrane as a helical segment. Residues 950–964 (VPPLPLIFQVTPLSG) lie on the Lumenal side of the membrane. Residues 965 to 985 (RQWVVVLQISLPVILLDEALK) traverse the membrane as a helical segment. At 986–999 (YLSRNHMHEEMSQK) the chain is on the cytoplasmic side.

Belongs to the cation transport ATPase (P-type) (TC 3.A.3) family. Type IIA subfamily. As to quaternary structure, interacts with sarcolipin (SLN). Interacts with phospholamban (PLN). Interacts with myoregulin (MRLN). Interacts with DWORF. Interacts with VMP1. Interacts with TUNAR; the interaction occurs at low levels in low glucose conditions and is increased by high glucose levels. Mg(2+) is required as a cofactor. As to expression, found in most tissues. Most abundant in thymus, trachea, salivary gland, spleen, bone marrow, lymph node, peripheral leukocytes, pancreas and colon. Also detected in fetal tissues. Expressed in cell lineages of hematopoietic, epithelial, or embryonic origin and also expressed in several cancer cell lines.

It localises to the nucleus membrane. The protein resides in the endoplasmic reticulum membrane. The protein localises to the sarcoplasmic reticulum membrane. It carries out the reaction Ca(2+)(in) + ATP + H2O = Ca(2+)(out) + ADP + phosphate + H(+). Inhibited by sarcolipin (SLN), phospholamban (PLN) and myoregulin (MRLN). Enhanced by DWORF; DWORF increases activity by displacing sarcolipin (SLN), phospholamban (PLN) and myoregulin (MRLN). Functionally, this magnesium-dependent enzyme catalyzes the hydrolysis of ATP coupled with the transport of calcium. Transports calcium ions from the cytosol into the sarcoplasmic/endoplasmic reticulum lumen. Contributes to calcium sequestration involved in muscular excitation/contraction. In Homo sapiens (Human), this protein is Sarcoplasmic/endoplasmic reticulum calcium ATPase 3.